The chain runs to 375 residues: MAGSQIKIPLPKPPDSDSQRLNAFPVIMAQEGKGRLLRQIRLRKILSGDPSDQQITFVNTYGFIRATPETSEFISESSQQKVTPVVTACMLSFGAGPVLEDPQHMLKALDQTDIRVRKTASDKEQILFEINRIPNLFRHYQISADHLIQASSDKYVKSPAKLIAGVNYIYCVTFLSVTVCSASLKFRVARPLLAARSRLVRAVQMEILLRVTCKKDSQMAKSMLNDPDGEGCIASVWFHLCNLCKGRNKLRSYDENYFASKCRKMNLTVSIGDMWGPTILVHAGGHIPTTAKPFFNSRGWVCHPIHQSSPSLAKTLWSSGCEIKAASAILQGSDYASLAKTDDIIYSKIKVDKDAANYKGVSWSPFRKSASMRNL.

The protein belongs to the morbillivirus/respirovirus/rubulavirus M protein family.

The protein localises to the virion. In terms of biological role, the M protein has a crucial role in virus assembly and interacts with the RNP complex as well as with the viral membrane. The protein is Matrix protein (M) of Mumps virus genotype A (strain Jeryl-Lynn) (MuV).